A 604-amino-acid polypeptide reads, in one-letter code: Kelch-like protein 20 (604 aa).

The region spanning 63–130 (CDVVLVVGAK…AYTSQITVEE (68 aa)) is the BTB domain. A BACK domain is found at 165–267 (CLGIRAFADT…SPKFLVGTVG (103 aa)). Kelch repeat units follow at residues 314 to 360 (VLFA…VLDD), 362 to 408 (LYAV…VLGG), 409 to 455 (FLYA…VLGG), 457 to 502 (LYAV…VYQD), 504 to 549 (IYAV…VVNG), and 551 to 596 (LMAV…VIKM).

As to quaternary structure, component of the BCR(KLHL20) E3 ubiquitin ligase complex, at least composed of CUL3, KLHL20 and RBX1. Interacts with PDZ-RhoGEF/ARHGEF11, DAPK1, PML and CORO7. Interacts with F-actin. Interacts with IFN-gamma (IFNG). Interacts (via kelch repeats) with IVNS1ABP (via kelch repeats); this interaction blocks the assembly of CUL3-KLHL20 complex.

The protein localises to the cytoplasm. It localises to the perinuclear region. The protein resides in the nucleus. Its subcellular location is the golgi apparatus. It is found in the trans-Golgi network. The protein localises to the cell projection. It localises to the axon. The protein resides in the dendrite. It functions in the pathway protein modification; protein ubiquitination. In terms of biological role, substrate-specific adapter of a BCR (BTB-CUL3-RBX1) E3 ubiquitin-protein ligase complex involved in interferon response and anterograde Golgi to endosome transport. The BCR(KLHL20) E3 ubiquitin ligase complex mediates the ubiquitination of DAPK1, leading to its degradation by the proteasome, thereby acting as a negative regulator of apoptosis. The BCR(KLHL20) E3 ubiquitin ligase complex also specifically mediates 'Lys-33'-linked ubiquitination. Involved in anterograde Golgi to endosome transport by mediating 'Lys-33'-linked ubiquitination of CORO7, promoting interaction between CORO7 and EPS15, thereby facilitating actin polymerization and post-Golgi trafficking. Also acts as a regulator of endothelial migration during angiogenesis by controlling the activation of Rho GTPases. The BCR(KLHL20) E3 ubiquitin ligase complex acts as a regulator of neurite outgrowth by mediating ubiquitination and degradation of PDZ-RhoGEF/ARHGEF11. This is Kelch-like protein 20 (Klhl20) from Mus musculus (Mouse).